The sequence spans 418 residues: tRNA(Met) cytidine acetate ligase (418 aa).

ATP-binding residues include Gly-95, Asn-161, and Arg-186.

This sequence belongs to the TmcAL family.

It is found in the cytoplasm. It catalyses the reaction cytidine(34) in elongator tRNA(Met) + acetate + ATP = N(4)-acetylcytidine(34) in elongator tRNA(Met) + AMP + diphosphate. Functionally, catalyzes the formation of N(4)-acetylcytidine (ac(4)C) at the wobble position of elongator tRNA(Met), using acetate and ATP as substrates. First activates an acetate ion to form acetyladenylate (Ac-AMP) and then transfers the acetyl group to tRNA to form ac(4)C34. The sequence is that of tRNA(Met) cytidine acetate ligase from Thermotoga petrophila (strain ATCC BAA-488 / DSM 13995 / JCM 10881 / RKU-1).